Here is a 243-residue protein sequence, read N- to C-terminus: Pyridoxine 5'-phosphate synthase (243 aa).

N9 is a 3-amino-2-oxopropyl phosphate binding site. Residue 11-12 (DH) coordinates 1-deoxy-D-xylulose 5-phosphate. R20 is a binding site for 3-amino-2-oxopropyl phosphate. Residue H45 is the Proton acceptor of the active site. 2 residues coordinate 1-deoxy-D-xylulose 5-phosphate: R47 and H52. E72 (proton acceptor) is an active-site residue. T102 lines the 1-deoxy-D-xylulose 5-phosphate pocket. H193 (proton donor) is an active-site residue. Residues G194 and 215 to 216 (GH) contribute to the 3-amino-2-oxopropyl phosphate site.

The protein belongs to the PNP synthase family. In terms of assembly, homooctamer; tetramer of dimers.

The protein localises to the cytoplasm. It catalyses the reaction 3-amino-2-oxopropyl phosphate + 1-deoxy-D-xylulose 5-phosphate = pyridoxine 5'-phosphate + phosphate + 2 H2O + H(+). It functions in the pathway cofactor biosynthesis; pyridoxine 5'-phosphate biosynthesis; pyridoxine 5'-phosphate from D-erythrose 4-phosphate: step 5/5. In terms of biological role, catalyzes the complicated ring closure reaction between the two acyclic compounds 1-deoxy-D-xylulose-5-phosphate (DXP) and 3-amino-2-oxopropyl phosphate (1-amino-acetone-3-phosphate or AAP) to form pyridoxine 5'-phosphate (PNP) and inorganic phosphate. The sequence is that of Pyridoxine 5'-phosphate synthase from Aliivibrio fischeri (strain ATCC 700601 / ES114) (Vibrio fischeri).